Here is a 417-residue protein sequence, read N- to C-terminus: Serine hydroxymethyltransferase (417 aa).

(6S)-5,6,7,8-tetrahydrofolate is bound by residues leucine 121 and 125–127 (GHL). Lysine 229 is subject to N6-(pyridoxal phosphate)lysine. 355–357 (SPF) provides a ligand contact to (6S)-5,6,7,8-tetrahydrofolate.

Belongs to the SHMT family. Homodimer. Pyridoxal 5'-phosphate is required as a cofactor.

The protein resides in the cytoplasm. It carries out the reaction (6R)-5,10-methylene-5,6,7,8-tetrahydrofolate + glycine + H2O = (6S)-5,6,7,8-tetrahydrofolate + L-serine. The protein operates within one-carbon metabolism; tetrahydrofolate interconversion. Its pathway is amino-acid biosynthesis; glycine biosynthesis; glycine from L-serine: step 1/1. Functionally, catalyzes the reversible interconversion of serine and glycine with tetrahydrofolate (THF) serving as the one-carbon carrier. This reaction serves as the major source of one-carbon groups required for the biosynthesis of purines, thymidylate, methionine, and other important biomolecules. Also exhibits THF-independent aldolase activity toward beta-hydroxyamino acids, producing glycine and aldehydes, via a retro-aldol mechanism. The protein is Serine hydroxymethyltransferase of Xanthomonas axonopodis pv. citri (strain 306).